A 454-amino-acid chain; its full sequence is Bifunctional protein GlmU (454 aa).

Residues 1-226 are pyrophosphorylase; that stretch reads MSLNVVILAA…AIEVEGANNR (226 aa). UDP-N-acetyl-alpha-D-glucosamine-binding positions include 8 to 11, K22, Q73, 78 to 79, 100 to 102, G137, E151, N166, and N224; these read LAAG, GT, and YGD. D102 provides a ligand contact to Mg(2+). N224 lines the Mg(2+) pocket. The interval 227–247 is linker; it reads VQLAQLERAYQARAAEKMMLE. The interval 248 to 454 is N-acetyltransferase; it reads GANLRDPARI…GWQRPIKIKK (207 aa). UDP-N-acetyl-alpha-D-glucosamine contacts are provided by R330 and K348. H360 functions as the Proton acceptor in the catalytic mechanism. The UDP-N-acetyl-alpha-D-glucosamine site is built by Y363 and N374. Residues A377, 383–384, S402, A420, and R437 each bind acetyl-CoA; that span reads NY.

The protein in the N-terminal section; belongs to the N-acetylglucosamine-1-phosphate uridyltransferase family. This sequence in the C-terminal section; belongs to the transferase hexapeptide repeat family. As to quaternary structure, homotrimer. Mg(2+) is required as a cofactor.

The protein localises to the cytoplasm. It carries out the reaction alpha-D-glucosamine 1-phosphate + acetyl-CoA = N-acetyl-alpha-D-glucosamine 1-phosphate + CoA + H(+). It catalyses the reaction N-acetyl-alpha-D-glucosamine 1-phosphate + UTP + H(+) = UDP-N-acetyl-alpha-D-glucosamine + diphosphate. It functions in the pathway nucleotide-sugar biosynthesis; UDP-N-acetyl-alpha-D-glucosamine biosynthesis; N-acetyl-alpha-D-glucosamine 1-phosphate from alpha-D-glucosamine 6-phosphate (route II): step 2/2. The protein operates within nucleotide-sugar biosynthesis; UDP-N-acetyl-alpha-D-glucosamine biosynthesis; UDP-N-acetyl-alpha-D-glucosamine from N-acetyl-alpha-D-glucosamine 1-phosphate: step 1/1. Its pathway is bacterial outer membrane biogenesis; LPS lipid A biosynthesis. Its function is as follows. Catalyzes the last two sequential reactions in the de novo biosynthetic pathway for UDP-N-acetylglucosamine (UDP-GlcNAc). The C-terminal domain catalyzes the transfer of acetyl group from acetyl coenzyme A to glucosamine-1-phosphate (GlcN-1-P) to produce N-acetylglucosamine-1-phosphate (GlcNAc-1-P), which is converted into UDP-GlcNAc by the transfer of uridine 5-monophosphate (from uridine 5-triphosphate), a reaction catalyzed by the N-terminal domain. The polypeptide is Bifunctional protein GlmU (Shewanella frigidimarina (strain NCIMB 400)).